Reading from the N-terminus, the 202-residue chain is Protein-methionine-sulfoxide reductase heme-binding subunit MsrQ (202 aa).

Transmembrane regions (helical) follow at residues 8-28 (IVWLKVLLHLAGFLPLVWLFW), 82-102 (LWCFAWATLHLTSYTLLELGI), 116-136 (PYLTLGMISWAILLALAVTST), 149-169 (LLHNFVYLVAILAPIHYLWSV), and 171-191 (IVSPQPVVYALLAAGLLTWRY).

It belongs to the MsrQ family. As to quaternary structure, heterodimer of a catalytic subunit (MsrP) and a heme-binding subunit (MsrQ). FMN serves as cofactor. Heme b is required as a cofactor.

The protein localises to the cell inner membrane. In terms of biological role, part of the MsrPQ system that repairs oxidized periplasmic proteins containing methionine sulfoxide residues (Met-O), using respiratory chain electrons. Thus protects these proteins from oxidative-stress damage caused by reactive species of oxygen and chlorine generated by the host defense mechanisms. MsrPQ is essential for the maintenance of envelope integrity under bleach stress, rescuing a wide series of structurally unrelated periplasmic proteins from methionine oxidation. MsrQ provides electrons for reduction to the reductase catalytic subunit MsrP, using the quinone pool of the respiratory chain. The sequence is that of Protein-methionine-sulfoxide reductase heme-binding subunit MsrQ from Klebsiella pneumoniae subsp. pneumoniae (strain ATCC 700721 / MGH 78578).